Reading from the N-terminus, the 319-residue chain is Acetyl-coenzyme A carboxylase carboxyl transferase subunit alpha (319 aa).

The 262-residue stretch at 35 to 296 folds into the CoA carboxyltransferase C-terminal domain; it reads DLDKEIEQLE…KATLLRQLED (262 aa).

It belongs to the AccA family. As to quaternary structure, acetyl-CoA carboxylase is a heterohexamer composed of biotin carboxyl carrier protein (AccB), biotin carboxylase (AccC) and two subunits each of ACCase subunit alpha (AccA) and ACCase subunit beta (AccD).

The protein resides in the cytoplasm. It carries out the reaction N(6)-carboxybiotinyl-L-lysyl-[protein] + acetyl-CoA = N(6)-biotinyl-L-lysyl-[protein] + malonyl-CoA. It participates in lipid metabolism; malonyl-CoA biosynthesis; malonyl-CoA from acetyl-CoA: step 1/1. Its function is as follows. Component of the acetyl coenzyme A carboxylase (ACC) complex. First, biotin carboxylase catalyzes the carboxylation of biotin on its carrier protein (BCCP) and then the CO(2) group is transferred by the carboxyltransferase to acetyl-CoA to form malonyl-CoA. The chain is Acetyl-coenzyme A carboxylase carboxyl transferase subunit alpha from Vibrio parahaemolyticus serotype O3:K6 (strain RIMD 2210633).